Here is a 137-residue protein sequence, read N- to C-terminus: Ig heavy chain V region MOPC 315 (137 aa).

An N-terminal signal peptide occupies residues 1 to 18 (MKVLSLLYLLTAIPGIMS). Residues 19 to 48 (DVQLQESGPGLVKPSQSLSLTCSVTGYSIT) form a framework-1 region. Cys40 and Cys114 are joined by a disulfide. Positions 49–54 (SGYFWN) are complementarity-determining-1. The tract at residues 55–68 (WIRQFPGNKLEWLG) is framework-2. Positions 69-84 (FIKYDGSNGYNPSLKN) are complementarity-determining-2. Residues 85–116 (RVSITRDTSENQFFLKLNSVTTEDTATYYCAG) form a framework-3 region. Positions 117-126 (DNDHLYYFDY) are complementarity-determining-3. The segment at 127–137 (WGQGTTLTVSS) is framework-4.

The chain is Ig heavy chain V region MOPC 315 from Mus musculus (Mouse).